We begin with the raw amino-acid sequence, 84 residues long: MAEKFNLQDRFLNILRTNKIPVKVYLVNGFQTKGIIRSFDNFTMLLENGSQQNLIYKHAVSTIMPESFVKLTKQQNEESENEEK.

The Sm domain occupies 9–69; the sequence is DRFLNILRTN…VSTIMPESFV (61 aa).

It belongs to the Hfq family. As to quaternary structure, homohexamer.

RNA chaperone that binds small regulatory RNA (sRNAs) and mRNAs to facilitate mRNA translational regulation in response to envelope stress, environmental stress and changes in metabolite concentrations. Also binds with high specificity to tRNAs. This Thermosipho africanus (strain TCF52B) protein is RNA-binding protein Hfq.